Consider the following 310-residue polypeptide: N-acetyl-gamma-glutamyl-phosphate reductase (310 aa).

The active site involves Cys-117.

It belongs to the NAGSA dehydrogenase family. Type 2 subfamily.

It localises to the cytoplasm. It carries out the reaction N-acetyl-L-glutamate 5-semialdehyde + phosphate + NADP(+) = N-acetyl-L-glutamyl 5-phosphate + NADPH + H(+). It functions in the pathway amino-acid biosynthesis; L-arginine biosynthesis; N(2)-acetyl-L-ornithine from L-glutamate: step 3/4. In terms of biological role, catalyzes the NADPH-dependent reduction of N-acetyl-5-glutamyl phosphate to yield N-acetyl-L-glutamate 5-semialdehyde. This is N-acetyl-gamma-glutamyl-phosphate reductase from Rhizobium johnstonii (strain DSM 114642 / LMG 32736 / 3841) (Rhizobium leguminosarum bv. viciae).